The primary structure comprises 157 residues: Large ribosomal subunit protein uL15 (157 aa).

It belongs to the universal ribosomal protein uL15 family. In terms of assembly, part of the 50S ribosomal subunit.

Binds to the 23S rRNA. In Ehrlichia ruminantium (strain Gardel), this protein is Large ribosomal subunit protein uL15.